The sequence spans 267 residues: Serine/arginine-rich splicing factor 7 (267 aa).

The region spanning 40 to 113 (TKVYVGNLGT…SRVRVELSTG (74 aa)) is the RRM domain. Residue K53 is modified to N6-acetyllysine; alternate. Residue K53 forms a Glycyl lysine isopeptide (Lys-Gly) (interchain with G-Cter in SUMO2); alternate linkage. The residue at position 61 (S61) is a Phosphoserine. Positions 110 to 127 (LSTGMPRRSRFDRPPARR) are sufficient for interaction with NXF1. The CCHC-type zinc finger occupies 133–150 (DRCYECGEKGHYAYDCHR). The segment covering 152 to 209 (SRRRRSRSRSRSHSRSRGRRYSRSRSRSRGRRSRSASPRRSRSVSLRRSRSASLRRSR) has biased composition (basic residues). Residues 152–267 (SRRRRSRSRS…HRSASPERMD (116 aa)) are disordered. 4 tandem repeats follow at residues 182–189 (RRSRSASP), 190–197 (RRSRSVSL), 198–205 (RRSRSASL), and 206–213 (RRSRSGSI). Residues 182–255 (RRSRSASPRR…SPKRSRSPSG (74 aa)) form a 6 X 8 AA repeats of R-R-S-R-S-X-S-X region. A phosphoserine mark is found at S192, S194, and S196. Residues S210, S212, S221, S223, and S225 each carry the phosphoserine modification. A compositionally biased stretch (basic residues) spans 223–251 (SRSRSRSRSISRPRSSRSKSRSPSPKRSR). A 5; approximate repeat occupies 240–247 (SKSRSPSP). The stretch at 248 to 255 (KRSRSPSG) is one 6; approximate repeat. Phosphoserine is present on residues S260 and S262.

The protein belongs to the splicing factor SR family. As to quaternary structure, found in large molecular weight complexes containing CCNL1 and the p110 isoforms of either CDC2L1 or CDC2L2. Interacts with CCNL2 and CPSF6. Interacts with NXF1. Interacts with YTHDC1. Post-translationally, extensively phosphorylated on serine residues in the RS domain.

It is found in the nucleus. The protein localises to the cytoplasm. In terms of biological role, required for pre-mRNA splicing. Represses the splicing of MAPT/Tau exon 10. May function as export adapter involved in mRNA nuclear export such as of histone H2A. Binds mRNA which is thought to be transferred to the NXF1-NXT1 heterodimer for export (TAP/NXF1 pathway); enhances NXF1-NXT1 RNA-binding activity. RNA-binding is semi-sequence specific. The chain is Serine/arginine-rich splicing factor 7 (Srsf7) from Mus musculus (Mouse).